Here is a 173-residue protein sequence, read N- to C-terminus: uncharacterized protein (173 aa).

A run of 3 helical transmembrane segments spans residues 24–44 (VAFIAIPISQFCFFNLLWLFF), 82–102 (YILFNILIFATNILVICSYFI), and 135–155 (LIKRFLAYITFPIGIFFILFS).

It is found in the cell membrane. This is an uncharacterized protein from Rickettsia prowazekii (strain Madrid E).